The following is a 320-amino-acid chain: Polyprenyl transferase pyr6 (320 aa).

The next 6 helical transmembrane spans lie at 22-42 (KYNCLFAIFPGVWSIFLAAAS), 60-80 (GLAFAYTYLLSGAGMVWNDWI), 101-121 (LATRAAIIWMLVQYAASVWLM), 127-147 (GQNLWTFMLPLTTGIILYPFG), 155-175 (LGIYPQYILGASSALTILPAW), and 186-206 (PDLLAKCLPLCVFLFLWTIYF). Residue Asn-224 is glycosylated (N-linked (GlcNAc...) asparagine). A helical membrane pass occupies residues 233–253 (YVHGLLLLQAVAVVMVIPWIL). N-linked (GlcNAc...) asparagine glycosylation is present at Asn-256. Transmembrane regions (helical) follow at residues 260-280 (WLWFSWLGVWTAALAEQLYLF) and 296-316 (FALGIWNVLACFVELLLVSGS).

Belongs to the UbiA prenyltransferase family. It depends on Mg(2+) as a cofactor.

It is found in the membrane. It catalyses the reaction 4-hydroxy-6-(pyridin-3-yl)-2H-pyran-2-one + (2E,6E)-farnesyl diphosphate = 4-hydroxy-3-[(2E,6E)-farnesyl]-6-(pyridin-3-yl)-2H-pyran-2-one + diphosphate. It functions in the pathway secondary metabolite biosynthesis; terpenoid biosynthesis. Its function is as follows. Polyprenyl transferase; part of the gene cluster that mediates the biosynthesis of pyripyropene A, a specific human acyl-coenzyme A:cholesterol acyltransferase 2 inhibitor. The first step of the pathway is the synthesis of nicotinyl-CoA from nicotinic acid by the nicotinic acid-CoA ligase pyr1. Nicotinyl-CoA is then a substrate of polyketide synthase pyr2 to produce 4-hydroxy-6-(3-pyridinyl)-2H-pyran-2-one (HPPO) which is further prenylated by the polyprenyl transferase pyr6 to yield farnesyl-HPPO. The next steps consist of an epoxidation of farnesyl-HPPO to epoxyfarnesyl-HPPO by FAD-dependent monooxygenase pyr5 and a cyclization of the terpenoid portion by the terpene cyclase pyr4 to yield deacetyl-pyripyropene E. The 2 cytochrome P450 monooxygenases pyr3 and pyr9, and the 2 acetyltransferases pyr7 and pyr8 are involved in the conversion of deacetyl-pyripyropene E into pyripyropene A through several cycles of oxidation and acetylation steps. Pyr7 acetylates deacetyl-pyripyropene E to pyripyropene E which is oxidized to 11-deacetyl-pyripyropene O by pyr3, which is in turn acetylated into pyripyropene O by pyr8. Pyripyropene O is then oxidized to deacetyl-pyripyropene A by pyr9. Deacetyl-pyripyropene A is finally acetylated to pyripyropene A by pyr8. The protein is Polyprenyl transferase pyr6 of Aspergillus fumigatus (strain ATCC MYA-4609 / CBS 101355 / FGSC A1100 / Af293) (Neosartorya fumigata).